Reading from the N-terminus, the 336-residue chain is MNDLDLNLVPPTAGSAYWRCVESKVESERLFYSRFILSPLKVGQANTIGLVMRRALLGEIKGTCITCAKFENITHEYSTMDGIQESVHDILINSKEIVLKSKSSEAQKAFISIVGPRRVTAQDIELPTSVEVIDPMQHIATITKKVKLNIELKIEKDSGYRRQNIVEYKDGNFTVDAVFTPIRSVNYSIHCFESHDKSIMKEMLLYEIWSNGSITPEEAIYEASRSSINLFLPFLQAEKEKEDFKGEDIHESNALHPSVSIVVDQMAKKVTFQHIFIEQLELSPKAYNFLKKINVHTISDLLDYSQDDLMKMKNFGKKSVEQILEALQKRFGMRLQ.

An alpha N-terminal domain (alpha-NTD) region spans residues Met1–Glu238. The alpha C-terminal domain (alpha-CTD) stretch occupies residues Ala267 to Gln336.

Belongs to the RNA polymerase alpha chain family. In plastids the minimal PEP RNA polymerase catalytic core is composed of four subunits: alpha, beta, beta', and beta''. When a (nuclear-encoded) sigma factor is associated with the core the holoenzyme is formed, which can initiate transcription.

It localises to the plastid. It is found in the chloroplast. It carries out the reaction RNA(n) + a ribonucleoside 5'-triphosphate = RNA(n+1) + diphosphate. Its function is as follows. DNA-dependent RNA polymerase catalyzes the transcription of DNA into RNA using the four ribonucleoside triphosphates as substrates. In Huperzia lucidula (Shining clubmoss), this protein is DNA-directed RNA polymerase subunit alpha.